The chain runs to 475 residues: Sulfate adenylyltransferase subunit 1 (475 aa).

In terms of domain architecture, tr-type G spans 25–240 (KSLLRFLTCG…VLETVEVINL (216 aa)). Residues 34–41 (GSVDDGKS) form a G1 region. 34–41 (GSVDDGKS) provides a ligand contact to GTP. Residues 92-96 (GITID) are G2. The G3 stretch occupies residues 113 to 116 (DTPG). GTP contacts are provided by residues 113–117 (DTPGH) and 168–171 (NKMD). The segment at 168 to 171 (NKMD) is G4. The tract at residues 206-208 (SAL) is G5.

This sequence belongs to the TRAFAC class translation factor GTPase superfamily. Classic translation factor GTPase family. CysN/NodQ subfamily. Heterodimer composed of CysD, the smaller subunit, and CysN.

The catalysed reaction is sulfate + ATP + H(+) = adenosine 5'-phosphosulfate + diphosphate. Its pathway is sulfur metabolism; hydrogen sulfide biosynthesis; sulfite from sulfate: step 1/3. With CysD forms the ATP sulfurylase (ATPS) that catalyzes the adenylation of sulfate producing adenosine 5'-phosphosulfate (APS) and diphosphate, the first enzymatic step in sulfur assimilation pathway. APS synthesis involves the formation of a high-energy phosphoric-sulfuric acid anhydride bond driven by GTP hydrolysis by CysN coupled to ATP hydrolysis by CysD. The polypeptide is Sulfate adenylyltransferase subunit 1 (Sodalis glossinidius (strain morsitans)).